A 183-amino-acid polypeptide reads, in one-letter code: ATP-dependent protease subunit HslV (183 aa).

The active site involves Thr-2. Gly-157, Cys-160, and Thr-163 together coordinate Na(+).

It belongs to the peptidase T1B family. HslV subfamily. As to quaternary structure, a double ring-shaped homohexamer of HslV is capped on each side by a ring-shaped HslU homohexamer. The assembly of the HslU/HslV complex is dependent on binding of ATP.

It is found in the cytoplasm. The enzyme catalyses ATP-dependent cleavage of peptide bonds with broad specificity.. Its activity is regulated as follows. Allosterically activated by HslU binding. Its function is as follows. Protease subunit of a proteasome-like degradation complex believed to be a general protein degrading machinery. This Vibrio campbellii (strain ATCC BAA-1116) protein is ATP-dependent protease subunit HslV.